The primary structure comprises 385 residues: 8-amino-7-oxononanoate synthase (385 aa).

Position 21 (Arg21) interacts with substrate. 108-109 is a binding site for pyridoxal 5'-phosphate; it reads GF. His133 is a substrate binding site. Positions 179, 207, and 233 each coordinate pyridoxal 5'-phosphate. Residue Lys236 is modified to N6-(pyridoxal phosphate)lysine. Position 352 (Thr352) interacts with substrate.

This sequence belongs to the class-II pyridoxal-phosphate-dependent aminotransferase family. BioF subfamily. As to quaternary structure, homodimer. Pyridoxal 5'-phosphate is required as a cofactor.

The enzyme catalyses 6-carboxyhexanoyl-[ACP] + L-alanine + H(+) = (8S)-8-amino-7-oxononanoate + holo-[ACP] + CO2. The protein operates within cofactor biosynthesis; biotin biosynthesis. Functionally, catalyzes the decarboxylative condensation of pimeloyl-[acyl-carrier protein] and L-alanine to produce 8-amino-7-oxononanoate (AON), [acyl-carrier protein], and carbon dioxide. The chain is 8-amino-7-oxononanoate synthase from Salmonella newport (strain SL254).